A 619-amino-acid chain; its full sequence is Dihydroxy-acid dehydratase (619 aa).

Asp81 serves as a coordination point for Mg(2+). Cys122 lines the [2Fe-2S] cluster pocket. 2 residues coordinate Mg(2+): Asp123 and Lys124. Lys124 carries the N6-carboxylysine modification. Cys195 is a [2Fe-2S] cluster binding site. Glu494 is a Mg(2+) binding site. Ser520 serves as the catalytic Proton acceptor.

It belongs to the IlvD/Edd family. Homodimer. It depends on [2Fe-2S] cluster as a cofactor. Mg(2+) serves as cofactor.

It carries out the reaction (2R)-2,3-dihydroxy-3-methylbutanoate = 3-methyl-2-oxobutanoate + H2O. It catalyses the reaction (2R,3R)-2,3-dihydroxy-3-methylpentanoate = (S)-3-methyl-2-oxopentanoate + H2O. It participates in amino-acid biosynthesis; L-isoleucine biosynthesis; L-isoleucine from 2-oxobutanoate: step 3/4. Its pathway is amino-acid biosynthesis; L-valine biosynthesis; L-valine from pyruvate: step 3/4. Functionally, functions in the biosynthesis of branched-chain amino acids. Catalyzes the dehydration of (2R,3R)-2,3-dihydroxy-3-methylpentanoate (2,3-dihydroxy-3-methylvalerate) into 2-oxo-3-methylpentanoate (2-oxo-3-methylvalerate) and of (2R)-2,3-dihydroxy-3-methylbutanoate (2,3-dihydroxyisovalerate) into 2-oxo-3-methylbutanoate (2-oxoisovalerate), the penultimate precursor to L-isoleucine and L-valine, respectively. The polypeptide is Dihydroxy-acid dehydratase (Shewanella sp. (strain ANA-3)).